The sequence spans 288 residues: Intermediate transcription factor 3 small subunit (288 aa).

The protein belongs to the orthopoxvirus OPG134 family. Heterodimer of a 45 kDa (A23R) and a 32 kDa (A8R) subunit to form the virus intermediate transcription factor (VITF)-3.

Its function is as follows. Acts with RNA polymerase to initiate transcription from intermediate gene promoters. The protein is Intermediate transcription factor 3 small subunit (OPG134) of Vaccinia virus (strain Copenhagen) (VACV).